The primary structure comprises 443 residues: Tol-Pal system protein TolB (443 aa).

The first 18 residues, 1 to 18 (MRNIVYFILTLFSLTSYA), serve as a signal peptide directing secretion.

Belongs to the TolB family. In terms of assembly, the Tol-Pal system is composed of five core proteins: the inner membrane proteins TolA, TolQ and TolR, the periplasmic protein TolB and the outer membrane protein Pal. They form a network linking the inner and outer membranes and the peptidoglycan layer.

It is found in the periplasm. Its function is as follows. Part of the Tol-Pal system, which plays a role in outer membrane invagination during cell division and is important for maintaining outer membrane integrity. The chain is Tol-Pal system protein TolB from Rickettsia prowazekii (strain Madrid E).